The primary structure comprises 858 residues: Tetratricopeptide repeat protein 7A (858 aa).

Serine 51 bears the Phosphoserine mark. TPR repeat units lie at residues 121-157, 177-210, 414-447, 497-531, 533-565, and 566-599; these read CEAMLILGKLHYVEGSYRDAISMYARAGIDDMSMENK, ERLPNSIASRFRLTEREEEVITCFERASWIAQVF, FHLWYQVALSMVACGKSAYAVSLLRECVKLRPSD, YSLQATDATLKSKQDELHRKALQTLERAQQLAPSD, QVILYVSLQLALVRQISSAMEQLQEALKVRKDD, and AHALHLLALLFSAQKHHQHALDVVNMAITEHPEN. Serine 182 carries the post-translational modification Phosphoserine. Phosphoserine is present on residues serine 647, serine 678, serine 679, and serine 690. Position 693 is a phosphothreonine (threonine 693). TPR repeat units follow at residues 745–778, 780–812, and 813–846; these read HSVLYMRGRLAEVKGNLEEAKQLYKEALTVNPDG, RIMHSLGLMLSRLGHKSLAQKVLRDAVERQSTC, and HEAWQGLGEVLQAQGQNEAAVDCFLTALELEASS.

As to quaternary structure, component of a phosphatidylinositol 4-kinase (PI4K) complex, composed of PI4KA, EFR3 (EFR3A or EFR3B), TTC7 (TTC7A or TTC7B) and HYCC (HYCC1 or HYCC2). Interacts with PI4KA. Interaction with PI4KA is direct. Interacts with EFR3 (EFR3A or EFR3B), interaction is direct. Interacts with HYCC (HYCC1 or HYCC2), interaction is direct. Association with the PI4K complex is strongly reduced by TMEM150A. As to expression, expressed in epithelial cells of the intestine, thymus, and pancreas (at protein level).

The protein resides in the cytoplasm. It localises to the cell membrane. Component of a complex required to localize phosphatidylinositol 4-kinase (PI4K) to the plasma membrane. The complex acts as a regulator of phosphatidylinositol 4-phosphate (PtdIns(4)P) synthesis. In the complex, plays a central role in bridging PI4KA to EFR3B and HYCC1, via direct interactions. The chain is Tetratricopeptide repeat protein 7A from Homo sapiens (Human).